Reading from the N-terminus, the 364-residue chain is Chorismate synthase (364 aa).

Residue Arg-47 participates in NADP(+) binding. FMN is bound by residues 124–126 (RGS), 240–241 (NA), Gly-284, 299–303 (KPTPS), and Arg-326.

Belongs to the chorismate synthase family. It depends on FMNH2 as a cofactor.

It catalyses the reaction 5-O-(1-carboxyvinyl)-3-phosphoshikimate = chorismate + phosphate. It functions in the pathway metabolic intermediate biosynthesis; chorismate biosynthesis; chorismate from D-erythrose 4-phosphate and phosphoenolpyruvate: step 7/7. Its function is as follows. Catalyzes the anti-1,4-elimination of the C-3 phosphate and the C-6 proR hydrogen from 5-enolpyruvylshikimate-3-phosphate (EPSP) to yield chorismate, which is the branch point compound that serves as the starting substrate for the three terminal pathways of aromatic amino acid biosynthesis. This reaction introduces a second double bond into the aromatic ring system. This Methanobrevibacter smithii (strain ATCC 35061 / DSM 861 / OCM 144 / PS) protein is Chorismate synthase.